The chain runs to 315 residues: Methionyl-tRNA formyltransferase (315 aa).

The N-terminal domain stretch occupies residues 2–189; that stretch reads SESLRIIFAG…LITTLKQLAD (188 aa). 113-116 is a binding site for (6S)-5,6,7,8-tetrahydrofolate; the sequence is SLLP. The segment at 210-315 is C-terminal domain; that stretch reads KEEARIDWSL…EWFVPGNRLA (106 aa).

It belongs to the Fmt family.

The catalysed reaction is L-methionyl-tRNA(fMet) + (6R)-10-formyltetrahydrofolate = N-formyl-L-methionyl-tRNA(fMet) + (6S)-5,6,7,8-tetrahydrofolate + H(+). Attaches a formyl group to the free amino group of methionyl-tRNA(fMet). The formyl group appears to play a dual role in the initiator identity of N-formylmethionyl-tRNA by promoting its recognition by IF2 and preventing the misappropriation of this tRNA by the elongation apparatus. This chain is Methionyl-tRNA formyltransferase, found in Escherichia coli O6:H1 (strain CFT073 / ATCC 700928 / UPEC).